The primary structure comprises 183 residues: Small ribosomal subunit protein cS23y (183 aa).

Belongs to the chloroplast-specific ribosomal protein cS23 family. Part of the 30S ribosomal subunit.

It is found in the plastid. The protein localises to the chloroplast. In terms of biological role, component of the chloroplast ribosome (chloro-ribosome), a dedicated translation machinery responsible for the synthesis of chloroplast genome-encoded proteins, including proteins of the transcription and translation machinery and components of the photosynthetic apparatus. In Arabidopsis thaliana (Mouse-ear cress), this protein is Small ribosomal subunit protein cS23y.